The sequence spans 602 residues: Aspartate--tRNA(Asp/Asn) ligase (602 aa).

Glu-176 is a binding site for L-aspartate. The aspartate stretch occupies residues 200–203; sequence QQFK. L-aspartate contacts are provided by Arg-222 and His-452. 222–224 serves as a coordination point for ATP; the sequence is RDE. Glu-490 lines the ATP pocket. An L-aspartate-binding site is contributed by Arg-497. 542–545 provides a ligand contact to ATP; it reads GIDR.

The protein belongs to the class-II aminoacyl-tRNA synthetase family. Type 1 subfamily. As to quaternary structure, homodimer.

It is found in the cytoplasm. The enzyme catalyses tRNA(Asx) + L-aspartate + ATP = L-aspartyl-tRNA(Asx) + AMP + diphosphate. In terms of biological role, aspartyl-tRNA synthetase with relaxed tRNA specificity since it is able to aspartylate not only its cognate tRNA(Asp) but also tRNA(Asn). Reaction proceeds in two steps: L-aspartate is first activated by ATP to form Asp-AMP and then transferred to the acceptor end of tRNA(Asp/Asn). In Rickettsia africae (strain ESF-5), this protein is Aspartate--tRNA(Asp/Asn) ligase.